The sequence spans 374 residues: Succinyl-diaminopimelate desuccinylase (374 aa).

H66 contributes to the Zn(2+) binding site. The active site involves D68. D99 provides a ligand contact to Zn(2+). Catalysis depends on E133, which acts as the Proton acceptor. Positions 134, 162, and 348 each coordinate Zn(2+).

This sequence belongs to the peptidase M20A family. DapE subfamily. As to quaternary structure, homodimer. The cofactor is Zn(2+). It depends on Co(2+) as a cofactor.

It catalyses the reaction N-succinyl-(2S,6S)-2,6-diaminopimelate + H2O = (2S,6S)-2,6-diaminopimelate + succinate. The protein operates within amino-acid biosynthesis; L-lysine biosynthesis via DAP pathway; LL-2,6-diaminopimelate from (S)-tetrahydrodipicolinate (succinylase route): step 3/3. Functionally, catalyzes the hydrolysis of N-succinyl-L,L-diaminopimelic acid (SDAP), forming succinate and LL-2,6-diaminopimelate (DAP), an intermediate involved in the bacterial biosynthesis of lysine and meso-diaminopimelic acid, an essential component of bacterial cell walls. The protein is Succinyl-diaminopimelate desuccinylase of Coxiella burnetii (strain RSA 331 / Henzerling II).